Consider the following 474-residue polypeptide: Stabilizer of axonemal microtubules 1 (474 aa).

Mn regions lie at residues 30-64 (KPCL…KGSI), 65-97 (PMEG…PSEE), 98-131 (NMDL…PYSN), 132-165 (KMEY…PASV), 166-199 (RFDN…LCNI), 200-232 (PLED…PCEI), 233-266 (PFES…GLDM), 267-299 (PFSN…PPED), 300-332 (SMDL…RKSG), 333-366 (RFEG…FPTE), 367-400 (PLDC…RGNV), and 401-434 (PVEG…TFEE). Residues 318 to 350 (PARSCRPAPQIRKSGRFEGSSTTKDDYKQWSSM) form a disordered region. A disordered region spans residues 444 to 474 (KPVSQAGSQQSSHLSVDDSENPSQRKLEVSA). A compositionally biased stretch (polar residues) spans 448–457 (QAGSQQSSHL).

Belongs to the FAM154 family. In terms of assembly, associates with microtubules via the Mn regions.

Its subcellular location is the cytoplasm. It is found in the cytoskeleton. The protein resides in the microtubule organizing center. It localises to the centrosome. The protein localises to the centriole. Its subcellular location is the cilium basal body. It is found in the cilium axoneme. The protein resides in the flagellum axoneme. Its function is as follows. May play a role in the regulation of cilium length. Stabilizes microtubules at low temperature. The sequence is that of Stabilizer of axonemal microtubules 1 (SAXO1) from Macaca fascicularis (Crab-eating macaque).